Here is a 365-residue protein sequence, read N- to C-terminus: Carbamoyl phosphate synthase small chain (365 aa).

CPSase regions lie at residues 1–166 (MKRQ…PSPG) and 1–169 (MKRQ…GRGH). 3 residues coordinate L-glutamine: Ser45, Gly218, and Gly220. Residues 170-357 (RVVLVDFGMK…LTMIENFKKE (188 aa)) enclose the Glutamine amidotransferase type-1 domain. Cys245 serves as the catalytic Nucleophile. L-glutamine contacts are provided by Leu246, Gln249, Asn287, Gly289, and Tyr290. Residues His330 and Glu332 contribute to the active site.

This sequence belongs to the CarA family. In terms of assembly, composed of two chains; the small (or glutamine) chain promotes the hydrolysis of glutamine to ammonia, which is used by the large (or ammonia) chain to synthesize carbamoyl phosphate. Tetramer of heterodimers (alpha,beta)4.

The catalysed reaction is hydrogencarbonate + L-glutamine + 2 ATP + H2O = carbamoyl phosphate + L-glutamate + 2 ADP + phosphate + 2 H(+). It catalyses the reaction L-glutamine + H2O = L-glutamate + NH4(+). The protein operates within amino-acid biosynthesis; L-arginine biosynthesis; carbamoyl phosphate from bicarbonate: step 1/1. Its pathway is pyrimidine metabolism; UMP biosynthesis via de novo pathway; (S)-dihydroorotate from bicarbonate: step 1/3. Small subunit of the glutamine-dependent carbamoyl phosphate synthetase (CPSase). CPSase catalyzes the formation of carbamoyl phosphate from the ammonia moiety of glutamine, carbonate, and phosphate donated by ATP, constituting the first step of 2 biosynthetic pathways, one leading to arginine and/or urea and the other to pyrimidine nucleotides. The small subunit (glutamine amidotransferase) binds and cleaves glutamine to supply the large subunit with the substrate ammonia. The protein is Carbamoyl phosphate synthase small chain of Bacillus cereus (strain ZK / E33L).